The sequence spans 377 residues: MKSKVLALLIPALLAAGAAHAAEVYNKDGNKLDLYGKVDGLHYFSDNSAKDGDQSYARLGFKGETQINDQLTGYGQWEYNIQANNTESSKNQSWTRLAFAGLKFADYGSFDYGRNYGVMYDIEGWTDMLPEFGGDSYTNADNFMTGRANGVATYRNTDFFGLVNGLNFAVQYQGNNEGASNGQEGTNNGRDVRHENGDGWGLSTTYDLGMGFSAGAAYTSSDRTNDQVNHTAAGGDKADAWTAGLKYDANNIYLATMYSETRNMTPFGDSDYAVANKTQNFEVTAQYQFDFGLRPAVSFLMSKGRDLHAAGGADNPAGVDDKDLVKYADIGATYYFNKNMSTYVDYKINLLDEDDSFYAANGISTDDIVALGLVYQF.

The first 21 residues, 1–21 (MKSKVLALLIPALLAAGAAHA), serve as a signal peptide directing secretion. Polar residues predominate over residues 175–189 (NNEGASNGQEGTNNG). Residues 175–196 (NNEGASNGQEGTNNGRDVRHEN) form a disordered region.

This sequence belongs to the Gram-negative porin family. As to quaternary structure, homotrimer.

It is found in the cell outer membrane. Its function is as follows. Forms pores that allow passive diffusion of small molecules across the outer membrane. Non-specific porin. This is Outer membrane porin N (ompN) from Escherichia coli (strain K12).